The following is a 272-amino-acid chain: Insulin-like growth factor-binding protein 1 (272 aa).

A signal peptide spans 1 to 25 (MPEFLTVVSWPFLILLSFQVRVVAG). The IGFBP N-terminal domain occupies 28–109 (QPWHCAPCTA…TRGQGACVLE (82 aa)). Cystine bridges form between C32/C59, C35/C61, C43/C62, C50/C65, C73/C86, and C80/C106. Residues 115-143 (TSSLSGSQHEEAKAAVASEDELAESPEMT) form a disordered region. Residues 132–143 (SEDELAESPEMT) are compositionally biased toward acidic residues. Phosphoserine occurs at positions 139, 157, and 169. The residue at position 170 (T170) is a Phosphothreonine. Y171 carries the post-translational modification Phosphotyrosine. One can recognise a Thyroglobulin type-1 domain in the interval 186–264 (KEPCQRELYK…SLETRGDPNC (79 aa)). 3 cysteine pairs are disulfide-bonded: C189-C219, C230-C241, and C243-C264. A Phosphoserine modification is found at S255. Positions 259–261 (RGD) match the Cell attachment site motif.

In terms of assembly, binds equally well IGF1 and IGF2. Interacts with integrin ITGA5:ITGB1. Interacts with VHL; this interaction inhibits HIF1A degradation.

It is found in the secreted. Its function is as follows. Multifunctional protein that plays a critical role in regulating the availability of IGFs such as IGF1 and IGF2 to their receptors and thereby regulates IGF-mediated cellular processes including cell migration, proliferation, differentiation or apoptosis in a cell-type specific manner. Also plays a positive role in cell migration by interacting with integrin ITGA5:ITGB1 through its RGD motif. Mechanistically, binding to integrins leads to activation of focal adhesion kinase/PTK2 and stimulation of the mitogen-activated protein kinase (MAPK) pathway. Regulates cardiomyocyte apoptosis by suppressing HIF-1alpha/HIF1A ubiquitination and subsequent degradation. The chain is Insulin-like growth factor-binding protein 1 (Igfbp1) from Rattus norvegicus (Rat).